A 592-amino-acid chain; its full sequence is Arginine--tRNA ligase (592 aa).

The 'HIGH' region signature appears at 129-139 (ANPTGPLHVGH).

This sequence belongs to the class-I aminoacyl-tRNA synthetase family. Monomer.

It is found in the cytoplasm. The catalysed reaction is tRNA(Arg) + L-arginine + ATP = L-arginyl-tRNA(Arg) + AMP + diphosphate. The polypeptide is Arginine--tRNA ligase (Dichelobacter nodosus (strain VCS1703A)).